We begin with the raw amino-acid sequence, 304 residues long: MPRQATSRLVVGEGEGSQGASGPAATMLRSLLLHSLRLCAQTASCLVLFPRFLGTAFMLWLLDFLCIRKHFLGRRRRGQPEPEVELNSEGEEVPPDDPPICVSDDNRLCTLASLKAVWHGQKLDFFKQAHEGGPAPNSEVVLPDGFQSQHILDYAQGNRPLVLNFGSCTUPPFMARMSAFQRLVTKYQRDVDFLIIYIEEAHPSDGWVTTDSPYIIPQHRSLEDRVSAARVLQQGAPGCALVLDTMANSSSSAYGAYFERLYVIQSGTIMYQGGRGPDGYQVSELRTWLERYDEQLHGARPRRV.

Residues 1 to 23 (MPRQATSRLVVGEGEGSQGASGP) are disordered. Topologically, residues 1–44 (MPRQATSRLVVGEGEGSQGASGPAATMLRSLLLHSLRLCAQTAS) are cytoplasmic. A helical; Signal-anchor for type II membrane protein transmembrane segment spans residues 45-67 (CLVLFPRFLGTAFMLWLLDFLCI). Residues 68 to 304 (RKHFLGRRRR…QLHGARPRRV (237 aa)) are Extracellular-facing. Positions 78–99 (GQPEPEVELNSEGEEVPPDDPP) are disordered. A compositionally biased stretch (acidic residues) spans 82–95 (PEVELNSEGEEVPP). U170 is an active-site residue. U170 is a non-standard amino acid (selenocysteine).

Belongs to the iodothyronine deiodinase family. Monomer. Homodimer. May undergo minor heretodimerization with DIO1 and DIO2. Expressed in placenta and several fetal tissues.

It localises to the cell membrane. It is found in the endosome membrane. The enzyme catalyses 3,3',5'-triiodo-L-thyronine + iodide + A + H(+) = L-thyroxine + AH2. It catalyses the reaction 3,3'-diiodo-L-thyronine + iodide + A + H(+) = 3,3',5-triiodo-L-thyronine + AH2. It carries out the reaction 3-iodo-L-thyronine + iodide + A + H(+) = 3,5-diiodo-L-thyronine + AH2. The catalysed reaction is L-thyronine + iodide + A + H(+) = 3-iodo-L-thyronine + AH2. The enzyme catalyses 3',5'-diiodo-L-thyronine + iodide + A + H(+) = 3,3',5'-triiodo-L-thyronine + AH2. It catalyses the reaction 3'-iodo-L-thyronine + iodide + A + H(+) = 3,3'-diiodo-L-thyronine + AH2. It carries out the reaction 3,3',5'-triiodothyronamine + iodide + A + H(+) = 3,3',5,5'-tetraiodothyronamine + AH2. The catalysed reaction is 3',5'-diiodothyronamine + iodide + A + H(+) = 3,3',5'-triiodothyronamine + AH2. The enzyme catalyses 3,3'-diiodothyronamine + iodide + A + H(+) = 3,3',5-triiodothyronamine + AH2. It catalyses the reaction 3-iodothyronamine + iodide + A + H(+) = 3,5-diiodothyronamine + AH2. It carries out the reaction 3'-iodothyronamine + iodide + A + H(+) = 3,3'-diiodothyronamine + AH2. The catalysed reaction is thyronamine + iodide + A + H(+) = 3-iodothyronamine + AH2. Plays a crucial role in the metabolism of thyroid hormones (TH) and has specific roles in TH activation and inactivation by deiodination. Catalyzes the deiodination of L-thyroxine (T4) to 3,3',5'-triiodothyronine (rT3), 3,5,3'-triiodothyronine (T3) to 3,3'-diiodothyronine (3,3'-T2), 3,5-diiodothyronine (3,5-T2) to 3-monoiodothyronine (3-T1), rT3 to 3',5'-diiodothyronine (3',5'-T2) and 3,3'-T2 to 3'-monoiodothyronine (3'-T1) via inner-ring deiodination (IRD). Catalyzes the deiodination of 3-T1 to L-thyronine (T0) via outer-ring deiodination (ORD). Catalyzes the tyrosyl ring deiodinations of 3,3',5,5'-tetraiodothyronamine, 3,3',5'-triiodothyronamine, 3,5,3'-triiodothyronamine, 3,5-diiodothyronamine, 3,3'-diiodothyronamine and 3-iodothyronamine. The protein is Thyroxine 5-deiodinase (DIO3) of Homo sapiens (Human).